We begin with the raw amino-acid sequence, 142 residues long: 3-hydroxyacyl-[acyl-carrier-protein] dehydratase FabZ (142 aa).

Residue H46 is part of the active site.

Belongs to the thioester dehydratase family. FabZ subfamily.

It localises to the cytoplasm. It carries out the reaction a (3R)-hydroxyacyl-[ACP] = a (2E)-enoyl-[ACP] + H2O. Functionally, involved in unsaturated fatty acids biosynthesis. Catalyzes the dehydration of short chain beta-hydroxyacyl-ACPs and long chain saturated and unsaturated beta-hydroxyacyl-ACPs. The chain is 3-hydroxyacyl-[acyl-carrier-protein] dehydratase FabZ from Thermus thermophilus (strain ATCC BAA-163 / DSM 7039 / HB27).